The sequence spans 334 residues: Heat-inducible transcription repressor HrcA (334 aa).

The protein belongs to the HrcA family.

In terms of biological role, negative regulator of class I heat shock genes (grpE-dnaK-dnaJ and groELS operons). Prevents heat-shock induction of these operons. The polypeptide is Heat-inducible transcription repressor HrcA (Acidovorax ebreus (strain TPSY) (Diaphorobacter sp. (strain TPSY))).